We begin with the raw amino-acid sequence, 31 residues long: Kappa-sparatoxin-Hv1c (31 aa).

3 cysteine pairs are disulfide-bonded: Cys2-Cys16, Cys9-Cys21, and Cys15-Cys25. Trp31 carries the tryptophan amide modification.

In terms of tissue distribution, expressed by the venom gland.

The protein resides in the secreted. Functionally, blocks transient outward voltage-gated potassium channels in rat ventricular myocytes (thus prolonging action-potential duration) and rat Kv4.2/KCNA4 channels expressed in Xenopus oocytes. Is also a weak blocker of calcium channels in rat cerebellar granule cells. The protein is Kappa-sparatoxin-Hv1c of Heteropoda venatoria (Brown huntsman spider).